Here is a 183-residue protein sequence, read N- to C-terminus: Adenine phosphoribosyltransferase (183 aa).

The protein belongs to the purine/pyrimidine phosphoribosyltransferase family. Homodimer.

Its subcellular location is the cytoplasm. The enzyme catalyses AMP + diphosphate = 5-phospho-alpha-D-ribose 1-diphosphate + adenine. Its pathway is purine metabolism; AMP biosynthesis via salvage pathway; AMP from adenine: step 1/1. Its function is as follows. Catalyzes a salvage reaction resulting in the formation of AMP, that is energically less costly than de novo synthesis. This chain is Adenine phosphoribosyltransferase, found in Erwinia tasmaniensis (strain DSM 17950 / CFBP 7177 / CIP 109463 / NCPPB 4357 / Et1/99).